Reading from the N-terminus, the 250-residue chain is 2,3-bisphosphoglycerate-dependent phosphoglycerate mutase (250 aa).

Substrate-binding positions include 10–17 (RHGESQWN), 23–24 (TG), Arg-62, 89–92 (ERHY), Lys-100, 116–117 (RR), and 185–186 (GN). The active-site Tele-phosphohistidine intermediate is the His-11. Glu-89 (proton donor/acceptor) is an active-site residue.

Belongs to the phosphoglycerate mutase family. BPG-dependent PGAM subfamily. Homodimer.

It carries out the reaction (2R)-2-phosphoglycerate = (2R)-3-phosphoglycerate. The protein operates within carbohydrate degradation; glycolysis; pyruvate from D-glyceraldehyde 3-phosphate: step 3/5. Functionally, catalyzes the interconversion of 2-phosphoglycerate and 3-phosphoglycerate. This chain is 2,3-bisphosphoglycerate-dependent phosphoglycerate mutase, found in Shigella dysenteriae serotype 1 (strain Sd197).